We begin with the raw amino-acid sequence, 512 residues long: Glutamyl-tRNA(Gln) amidotransferase subunit A (512 aa).

Catalysis depends on charge relay system residues Lys82 and Ser157. Ser181 serves as the catalytic Acyl-ester intermediate.

Belongs to the amidase family. GatA subfamily. In terms of assembly, heterotrimer of A, B and C subunits.

The enzyme catalyses L-glutamyl-tRNA(Gln) + L-glutamine + ATP + H2O = L-glutaminyl-tRNA(Gln) + L-glutamate + ADP + phosphate + H(+). Allows the formation of correctly charged Gln-tRNA(Gln) through the transamidation of misacylated Glu-tRNA(Gln) in organisms which lack glutaminyl-tRNA synthetase. The reaction takes place in the presence of glutamine and ATP through an activated gamma-phospho-Glu-tRNA(Gln). The sequence is that of Glutamyl-tRNA(Gln) amidotransferase subunit A from Bordetella petrii (strain ATCC BAA-461 / DSM 12804 / CCUG 43448).